Consider the following 154-residue polypeptide: S-ribosylhomocysteine lyase (154 aa).

Fe cation-binding residues include H57, H61, and C124.

It belongs to the LuxS family. As to quaternary structure, homodimer. The cofactor is Fe cation.

The enzyme catalyses S-(5-deoxy-D-ribos-5-yl)-L-homocysteine = (S)-4,5-dihydroxypentane-2,3-dione + L-homocysteine. Involved in the synthesis of autoinducer 2 (AI-2) which is secreted by bacteria and is used to communicate both the cell density and the metabolic potential of the environment. The regulation of gene expression in response to changes in cell density is called quorum sensing. Catalyzes the transformation of S-ribosylhomocysteine (RHC) to homocysteine (HC) and 4,5-dihydroxy-2,3-pentadione (DPD). The protein is S-ribosylhomocysteine lyase of Exiguobacterium sibiricum (strain DSM 17290 / CCUG 55495 / CIP 109462 / JCM 13490 / 255-15).